The primary structure comprises 389 residues: N-terminal EF-hand calcium-binding protein 2 (389 aa).

Arg-10 bears the Omega-N-methylarginine mark. Arg-42 carries the post-translational modification Asymmetric dimethylarginine. 2 consecutive EF-hand domains span residues 63–98 and 99–132; these read GGTA…GVLN and EKEL…HMGD. Residues Asp-76, Asn-78, Asp-80, Lys-82, Glu-87, Asp-110, Asp-112, Thr-114, His-116, and Glu-121 each contribute to the Ca(2+) site. Positions 173–198 form a coiled coil; the sequence is LKETANQIQSLLSSVESAVEAIEEQT. Positions 289-377 constitute an ABM domain; it reads QLVRQEMAVC…LSQPEALSQI (89 aa).

Interacts (calcium-dependent) with ADORA2A and GRM5. As to expression, expressed in the iris, in the ciliary margin of the retina and in the inner portion of the neural retina. Expressed in the spinal dorsal horn with especially strong expression in lamina IIi; found in excitory synaptic boutons (at protein level).

Its subcellular location is the cytoplasm. It is found in the cell projection. The protein resides in the dendrite. The protein localises to the axon. It localises to the cell membrane. May act as a signaling scaffold protein that senses intracellular calcium. Can modulate ligand-induced internalization of ADORA2A and coupling efficiency of mGluR5/GRM5; for both receptors may regulate signaling activity such as promoting MAPK1/3 (ERK1/2) activation. The sequence is that of N-terminal EF-hand calcium-binding protein 2 (Necab2) from Mus musculus (Mouse).